The chain runs to 171 residues: ATP synthase subunit b (171 aa).

Residues 10 to 30 (GLYYGDSIFYAVCFLLLMWII) traverse the membrane as a helical segment.

It belongs to the ATPase B chain family. F-type ATPases have 2 components, F(1) - the catalytic core - and F(0) - the membrane proton channel. F(1) has five subunits: alpha(3), beta(3), gamma(1), delta(1), epsilon(1). F(0) has three main subunits: a(1), b(2) and c(10-14). The alpha and beta chains form an alternating ring which encloses part of the gamma chain. F(1) is attached to F(0) by a central stalk formed by the gamma and epsilon chains, while a peripheral stalk is formed by the delta and b chains.

The protein resides in the cell membrane. In terms of biological role, f(1)F(0) ATP synthase produces ATP from ADP in the presence of a proton or sodium gradient. F-type ATPases consist of two structural domains, F(1) containing the extramembraneous catalytic core and F(0) containing the membrane proton channel, linked together by a central stalk and a peripheral stalk. During catalysis, ATP synthesis in the catalytic domain of F(1) is coupled via a rotary mechanism of the central stalk subunits to proton translocation. Functionally, component of the F(0) channel, it forms part of the peripheral stalk, linking F(1) to F(0). The sequence is that of ATP synthase subunit b from Levilactobacillus brevis (strain ATCC 367 / BCRC 12310 / CIP 105137 / JCM 1170 / LMG 11437 / NCIMB 947 / NCTC 947) (Lactobacillus brevis).